The primary structure comprises 277 residues: Large ribosomal subunit protein uL2 (277 aa).

The disordered stretch occupies residues 219–277 (TVRGSVMNPNDHPHGGGEGRSPIGHPSPRTPWGKPALGYKTRKNKKYSDRFIVKRRHDK).

Belongs to the universal ribosomal protein uL2 family. Part of the 50S ribosomal subunit. Forms a bridge to the 30S subunit in the 70S ribosome.

In terms of biological role, one of the primary rRNA binding proteins. Required for association of the 30S and 50S subunits to form the 70S ribosome, for tRNA binding and peptide bond formation. It has been suggested to have peptidyltransferase activity; this is somewhat controversial. Makes several contacts with the 16S rRNA in the 70S ribosome. The polypeptide is Large ribosomal subunit protein uL2 (Clostridium botulinum (strain 657 / Type Ba4)).